The following is a 453-amino-acid chain: Nuclear distribution protein PAC1-2 (453 aa).

Residues Q9–E41 form the LisH domain. The stretch at V63–S87 forms a coiled coil. A disordered region spans residues L84–R108. WD repeat units follow at residues S113–K154, H156–R196, G200–T243, G246–K285, G290–L350, G352–K391, and A396–V448.

It belongs to the WD repeat LIS1/nudF family. In terms of assembly, self-associates. Interacts with NDL1 and dynein.

It localises to the cytoplasm. The protein resides in the cytoskeleton. It is found in the spindle pole. Its function is as follows. Positively regulates the activity of the minus-end directed microtubule motor protein dynein. May enhance dynein-mediated microtubule sliding by targeting dynein to the microtubule plus end. Required for nuclear migration during vegetative growth as well as development. Required for retrograde early endosome (EE) transport from the hyphal tip. Required for localization of dynein to the mitotic spindle poles. Recruits additional proteins to the dynein complex at SPBs. This chain is Nuclear distribution protein PAC1-2, found in Chaetomium globosum (strain ATCC 6205 / CBS 148.51 / DSM 1962 / NBRC 6347 / NRRL 1970) (Soil fungus).